Consider the following 99-residue polypeptide: UPF0235 protein Sbal223_1335 (99 aa).

This sequence belongs to the UPF0235 family.

The chain is UPF0235 protein Sbal223_1335 from Shewanella baltica (strain OS223).